Here is a 343-residue protein sequence, read N- to C-terminus: Membrane progestin receptor delta (343 aa).

Topologically, residues 1–49 (MLSLKMPQLLRVHQVPRVFWEEGIMSGYRCPTSSALDCVLSSFQMTNET) are cytoplasmic. The helical transmembrane segment at 50–70 (VNIWTHFLPTWYFLWRLLALG) threads the bilayer. At 71 to 79 (SPGFRADPY) the chain is on the extracellular side. The chain crosses the membrane as a helical span at residues 80 to 100 (HLPLLVFLLPACLYPFASCCA). Over 101–112 (HTFSSMSPRARH) the chain is Cytoplasmic. A helical transmembrane segment spans residues 113–133 (ICYFLDYGALSLYSLGCAFPY). Residues 134–146 (AAYSMPASWLHSR) are Extracellular-facing. The chain crosses the membrane as a helical span at residues 147-167 (LHQLFVPAAALNSFLCTGLSC). The Cytoplasmic segment spans residues 168–216 (YSRFPELEYPGFSKALRTAAFAYPFLFDNLPLFYRLRLCWGGAHSCGRD). A helical transmembrane segment spans residues 217–237 (ALSSNHGYHLLCALLSGFLFA). The Extracellular segment spans residues 238–257 (ARLPERLAPGRFDYIGHSHQ). A helical transmembrane segment spans residues 258 to 278 (LFHICAVLGTHFQLEAVLADM). Topologically, residues 279 to 291 (GSRRAWLAVQEPT) are cytoplasmic. The chain crosses the membrane as a helical span at residues 292–312 (LGLGATVATLSLAVIGNLFII). At 313–343 (AAFTASLLRMPGPCPLLQGSPLEEGLQAKQQ) the chain is on the extracellular side.

The protein belongs to the ADIPOR family. In terms of assembly, homodimer.

The protein resides in the cell membrane. Functionally, plasma membrane progesterone (P4) receptor coupled to G proteins. Seems to act through a G(s) mediated pathway. Involved in neurosteroid inhibition of apoptosis. May be involved in regulating rapid P4 signaling in the nervous system. Also binds dehydroepiandrosterone (DHEA), pregnanolone, pregnenolone and allopregnanolone. This chain is Membrane progestin receptor delta, found in Mus musculus (Mouse).